The following is a 301-amino-acid chain: Elongation factor Ts (301 aa).

The segment at 82–85 is involved in Mg(2+) ion dislocation from EF-Tu; sequence TDFV.

It belongs to the EF-Ts family.

The protein resides in the cytoplasm. In terms of biological role, associates with the EF-Tu.GDP complex and induces the exchange of GDP to GTP. It remains bound to the aminoacyl-tRNA.EF-Tu.GTP complex up to the GTP hydrolysis stage on the ribosome. The chain is Elongation factor Ts from Hyphomonas neptunium (strain ATCC 15444).